The sequence spans 249 residues: tRNA (guanine-N(1)-)-methyltransferase (249 aa).

S-adenosyl-L-methionine-binding positions include Gly-113 and 133 to 138 (IGDFVL).

The protein belongs to the RNA methyltransferase TrmD family. Homodimer.

It is found in the cytoplasm. It carries out the reaction guanosine(37) in tRNA + S-adenosyl-L-methionine = N(1)-methylguanosine(37) in tRNA + S-adenosyl-L-homocysteine + H(+). In terms of biological role, specifically methylates guanosine-37 in various tRNAs. The chain is tRNA (guanine-N(1)-)-methyltransferase from Aliivibrio salmonicida (strain LFI1238) (Vibrio salmonicida (strain LFI1238)).